A 351-amino-acid polypeptide reads, in one-letter code: Photosystem II D2 protein (351 aa).

Residues 39 to 59 (TAYLAIGGWLTGTTFVTSWYT) traverse the membrane as a helical segment. Residue His-116 coordinates chlorophyll a. Residues 123–139 (GFMLRQFEISRLVGIRP) traverse the membrane as a helical segment. Residues Gln-128 and Asn-141 each coordinate pheophytin a. Residues 151–164 (VFVSVFLIYPLGQS) traverse the membrane as a helical segment. His-196 provides a ligand contact to chlorophyll a. Residues 206 to 226 (GALLSAIHGVTVENTLYEDGE) form a helical membrane-spanning segment. The a plastoquinone site is built by His-213 and Phe-260. His-213 lines the Fe cation pocket. His-267 is a binding site for Fe cation. The chain crosses the membrane as a helical span at residues 277-293 (GLWTSSIGIIGLALNLR).

Belongs to the reaction center PufL/M/PsbA/D family. As to quaternary structure, PSII is composed of 1 copy each of membrane proteins PsbA, PsbB, PsbC, PsbD, PsbE, PsbF, PsbH, PsbI, PsbJ, PsbK, PsbL, PsbM, PsbT, PsbX, PsbY, PsbZ, Psb30/Ycf12, peripheral proteins PsbO, CyanoQ (PsbQ), PsbU, PsbV and a large number of cofactors. It forms dimeric complexes. The cofactor is The D1/D2 heterodimer binds P680, chlorophylls that are the primary electron donor of PSII, and subsequent electron acceptors. It shares a non-heme iron and each subunit binds pheophytin, quinone, additional chlorophylls, carotenoids and lipids. There is also a Cl(-1) ion associated with D1 and D2, which is required for oxygen evolution. The PSII complex binds additional chlorophylls, carotenoids and specific lipids..

The protein resides in the host cellular thylakoid membrane. The catalysed reaction is 2 a plastoquinone + 4 hnu + 2 H2O = 2 a plastoquinol + O2. Photosystem II (PSII) is a light-driven water:plastoquinone oxidoreductase that uses light energy to abstract electrons from H(2)O, generating O(2) and a proton gradient subsequently used for ATP formation. It consists of a core antenna complex that captures photons, and an electron transfer chain that converts photonic excitation into a charge separation. The D1/D2 (PsbA/PsbD) reaction center heterodimer binds P680, the primary electron donor of PSII as well as several subsequent electron acceptors. D2 is needed for assembly of a stable PSII complex. In Synechococcus, this protein is Photosystem II D2 protein (psbD).